Here is a 659-residue protein sequence, read N- to C-terminus: Threonine--tRNA ligase (659 aa).

Residues 1-61 (MIDLIFPDGS…TPDLLGGGNR (61 aa)) enclose the TGS domain. The interval 249–541 (DHRKLGKTMD…LLENYAGHLP (293 aa)) is catalytic. C341, H392, and H518 together coordinate Zn(2+). Positions 637-659 (EEATPPDLARDRAVAAPAELAQA) are disordered.

The protein belongs to the class-II aminoacyl-tRNA synthetase family. In terms of assembly, homodimer. The cofactor is Zn(2+).

It is found in the cytoplasm. The catalysed reaction is tRNA(Thr) + L-threonine + ATP = L-threonyl-tRNA(Thr) + AMP + diphosphate + H(+). Catalyzes the attachment of threonine to tRNA(Thr) in a two-step reaction: L-threonine is first activated by ATP to form Thr-AMP and then transferred to the acceptor end of tRNA(Thr). Also edits incorrectly charged L-seryl-tRNA(Thr). This Caulobacter sp. (strain K31) protein is Threonine--tRNA ligase.